The primary structure comprises 327 residues: S-adenosylmethionine/S-adenosylhomocysteine transporter (327 aa).

10 consecutive transmembrane segments (helical) span residues 22–42 (CDMA…SFAL), 53–73 (LFVT…LLLC), 85–105 (IMPI…LEFI), 114–134 (TACF…YVQL), 143–163 (LGGL…GGSE), 165–185 (VAEW…ATCL), 202–222 (SLSM…LSLI), 240–260 (LFLQ…YNLF), 271–291 (FLSF…WLLL), and 294–314 (SFPP…RLIY). In terms of domain architecture, EamA 1 spans 34-157 (FIWSSSFALS…LGLVSYLVYL (124 aa)). The 125-residue stretch at 189–313 (GWTLLRKLGR…GFMVLGCRLI (125 aa)) folds into the EamA 2 domain.

It belongs to the drug/metabolite transporter (DMT) superfamily. 10 TMS drug/metabolite exporter (DME) (TC 2.A.7.3) family.

The protein localises to the cell membrane. In terms of biological role, transports S-adenosylmethionine (SAM) and S-adenosylhomocysteine (SAH). Allows bacteria to acquire SAM from the eukaryotic host cell and to likely remove the toxic by-product SAH. The sequence is that of S-adenosylmethionine/S-adenosylhomocysteine transporter from Chlamydia trachomatis serovar D (strain ATCC VR-885 / DSM 19411 / UW-3/Cx).